We begin with the raw amino-acid sequence, 131 residues long: Glutaredoxin arsenate reductase (131 aa).

Residues cysteine 8 and cysteine 80 each act as nucleophile in the active site. Disulfide bonds link cysteine 8/cysteine 80 and cysteine 80/cysteine 82.

The protein belongs to the low molecular weight phosphotyrosine protein phosphatase family. In terms of assembly, homodimer.

It carries out the reaction O-phospho-L-tyrosyl-[protein] + H2O = L-tyrosyl-[protein] + phosphate. It catalyses the reaction [glutaredoxin]-dithiol + arsenate + glutathione + H(+) = glutathionyl-S-S-[glutaredoxin] + arsenite + H2O. Its function is as follows. Reduces arsenate [As(V)] to arsenite [As(III)] using glutathione and glutaredoxin as sources of reducing equivalents. GrxA is the most effective electron donor in vivo compared to other glutaredoxins. Constitutes the major arsenate reductase compared to ArsI1 and ArsI2. Also shows weak phosphatase activity toward p-nitrophenyl phosphate. This chain is Glutaredoxin arsenate reductase (arsC), found in Synechocystis sp. (strain ATCC 27184 / PCC 6803 / Kazusa).